A 62-amino-acid polypeptide reads, in one-letter code: Photosystem II reaction center protein Z (62 aa).

Transmembrane regions (helical) follow at residues 8–28 (AVFA…VVFA) and 41–61 (FSGT…NSLI).

This sequence belongs to the PsbZ family. As to quaternary structure, PSII is composed of 1 copy each of membrane proteins PsbA, PsbB, PsbC, PsbD, PsbE, PsbF, PsbH, PsbI, PsbJ, PsbK, PsbL, PsbM, PsbT, PsbY, PsbZ, Psb30/Ycf12, at least 3 peripheral proteins of the oxygen-evolving complex and a large number of cofactors. It forms dimeric complexes.

The protein resides in the plastid. The protein localises to the chloroplast thylakoid membrane. In terms of biological role, may control the interaction of photosystem II (PSII) cores with the light-harvesting antenna, regulates electron flow through the 2 photosystem reaction centers. PSII is a light-driven water plastoquinone oxidoreductase, using light energy to abstract electrons from H(2)O, generating a proton gradient subsequently used for ATP formation. In Spinacia oleracea (Spinach), this protein is Photosystem II reaction center protein Z.